Here is a 200-residue protein sequence, read N- to C-terminus: Dephospho-CoA kinase (200 aa).

Positions 4–200 constitute a DPCK domain; that stretch reads TIGLTGSVAT…TFIERFVKNK (197 aa). 12-17 contacts ATP; sequence ATGKST.

The protein belongs to the CoaE family.

Its subcellular location is the cytoplasm. It catalyses the reaction 3'-dephospho-CoA + ATP = ADP + CoA + H(+). It functions in the pathway cofactor biosynthesis; coenzyme A biosynthesis; CoA from (R)-pantothenate: step 5/5. Functionally, catalyzes the phosphorylation of the 3'-hydroxyl group of dephosphocoenzyme A to form coenzyme A. The protein is Dephospho-CoA kinase of Listeria monocytogenes serovar 1/2a (strain ATCC BAA-679 / EGD-e).